Reading from the N-terminus, the 452-residue chain is Growth/differentiation factor 6 (452 aa).

The signal sequence occupies residues 1–22; the sequence is MDTPRVLLWAIFLISFLWDLPG. Positions 23–332 are excised as a propeptide; the sequence is FQQASISSSS…LPSPGRRRRR (310 aa). The disordered stretch occupies residues 29 to 93; it reads SSSSSTELDS…QEPPGRGPRV (65 aa). Composition is skewed to basic and acidic residues over residues 37–46 and 58–75; these read DSTKDVENRK and AEGR…ELRR. An N-linked (GlcNAc...) asparagine glycan is attached at Asn115. 2 disordered regions span residues 244 to 267 and 301 to 348; these read RDSG…LGFG and AEAA…KKSR. Over residues 301–317 the composition is skewed to low complexity; the sequence is AEAAGAEGSWPAPSGAP. Basic residues predominate over residues 327 to 348; that stretch reads GRRRRRTALSSRHGKRHGKKSR. 3 disulfides stabilise this stretch: Cys351–Cys417, Cys380–Cys449, and Cys384–Cys451.

This sequence belongs to the TGF-beta family. As to quaternary structure, homodimer; disulfide-linked.

The protein localises to the secreted. In terms of biological role, growth factor that controls proliferation and cellular differentiation in the retina and bone formation. Plays a key role in regulating apoptosis during retinal development. Establishes dorsal-ventral positional information in the retina and controls the formation of the retinotectal map. Required for normal formation of bones and joints in the limbs, skull, digits and axial skeleton. Plays a key role in establishing boundaries between skeletal elements during development. Regulation of GDF6 expression seems to be a mechanism for evolving species-specific changes in skeletal structures. Seems to positively regulate differentiation of chondrogenic tissue through the growth factor receptors subunits BMPR1A, BMPR1B, BMPR2 and ACVR2A, leading to the activation of SMAD1-SMAD5-SMAD8 complex. The regulation of chondrogenic differentiation is inhibited by NOG. Also involved in the induction of adipogenesis from mesenchymal stem cells. This mechanism acts through the growth factor receptors subunits BMPR1A, BMPR2 and ACVR2A and the activation of SMAD1-SMAD5-SMAD8 complex and MAPK14/p38. The sequence is that of Growth/differentiation factor 6 (Gdf6) from Rattus norvegicus (Rat).